Here is a 332-residue protein sequence, read N- to C-terminus: Ferredoxin--NADP reductase 2 (332 aa).

The FAD site is built by glutamate 37, glutamine 45, tyrosine 50, valine 90, phenylalanine 124, aspartate 285, and threonine 326.

This sequence belongs to the ferredoxin--NADP reductase type 2 family. As to quaternary structure, homodimer. The cofactor is FAD.

It carries out the reaction 2 reduced [2Fe-2S]-[ferredoxin] + NADP(+) + H(+) = 2 oxidized [2Fe-2S]-[ferredoxin] + NADPH. The polypeptide is Ferredoxin--NADP reductase 2 (yumC) (Bacillus subtilis (strain 168)).